Reading from the N-terminus, the 507-residue chain is Dolichyl pyrophosphate Man9GlcNAc2 alpha-1,3-glucosyltransferase (507 aa).

The Cytoplasmic segment spans residues Met1–Lys3. A helical transmembrane segment spans residues Trp4–Gly24. Residues Ser25–Thr114 are Lumenal-facing. An N-linked (GlcNAc...) asparagine glycan is attached at Asn59. Residues Thr115–Leu135 traverse the membrane as a helical segment. Topologically, residues Lys136–Lys143 are cytoplasmic. A helical transmembrane segment spans residues Val144–Phe164. Residues Gln165–Ser168 lie on the Lumenal side of the membrane. The chain crosses the membrane as a helical span at residues Val169–Gly189. Topologically, residues Ser190–Lys226 are cytoplasmic. Residues Gly227 to Leu247 form a helical membrane-spanning segment. The Lumenal segment spans residues Pro248 to Gln297. The helical transmembrane segment at Leu298–Val318 threads the bilayer. The Cytoplasmic portion of the chain corresponds to Gln319–Leu338. A helical membrane pass occupies residues Phe339–Ile359. Residues Asn360–Glu361 lie on the Lumenal side of the membrane. Residues Val362–Leu382 traverse the membrane as a helical segment. Residues Lys383–Leu387 lie on the Cytoplasmic side of the membrane. A helical transmembrane segment spans residues Leu388–Phe408. Residues Glu409–Ser441 are Lumenal-facing. A helical membrane pass occupies residues Leu442 to Pro462. Topologically, residues Pro463–Ser473 are cytoplasmic. A helical transmembrane segment spans residues Val474 to Leu494. At Trp495 to Ser507 the chain is on the lumenal side.

The protein belongs to the ALG6/ALG8 glucosyltransferase family.

It is found in the endoplasmic reticulum membrane. The catalysed reaction is an alpha-D-Man-(1-&gt;2)-alpha-D-Man-(1-&gt;2)-alpha-D-Man-(1-&gt;3)-[alpha-D-Man-(1-&gt;2)-alpha-D-Man-(1-&gt;3)-[alpha-D-Man-(1-&gt;2)-alpha-D-Man-(1-&gt;6)]-alpha-D-Man-(1-&gt;6)]-beta-D-Man-(1-&gt;4)-beta-D-GlcNAc-(1-&gt;4)-alpha-D-GlcNAc-diphospho-di-trans,poly-cis-dolichol + a di-trans,poly-cis-dolichyl beta-D-glucosyl phosphate = an alpha-D-Glc-(1-&gt;3)-alpha-D-Man-(1-&gt;2)-alpha-D-Man-(1-&gt;2)-alpha-D-Man-(1-&gt;3)-[alpha-D-Man-(1-&gt;2)-alpha-D-Man-(1-&gt;3)-[alpha-D-Man-(1-&gt;2)-alpha-D-Man-(1-&gt;6)]-alpha-D-Man-(1-&gt;6)]-beta-D-Man-(1-&gt;4)-beta-D-GlcNAc-(1-&gt;4)-alpha-D-GlcNAc-diphospho-di-trans,poly-cis-dolichol + a di-trans,poly-cis-dolichyl phosphate + H(+). It functions in the pathway protein modification; protein glycosylation. Dolichyl pyrophosphate Man9GlcNAc2 alpha-1,3-glucosyltransferase that operates in the biosynthetic pathway of dolichol-linked oligosaccharides, the glycan precursors employed in protein asparagine (N)-glycosylation. The assembly of dolichol-linked oligosaccharides begins on the cytosolic side of the endoplasmic reticulum membrane and finishes in its lumen. The sequential addition of sugars to dolichol pyrophosphate produces dolichol-linked oligosaccharides containing fourteen sugars, including two GlcNAcs, nine mannoses and three glucoses. Once assembled, the oligosaccharide is transferred from the lipid to nascent proteins by oligosaccharyltransferases. In the lumen of the endoplasmic reticulum, adds the first glucose residue from dolichyl phosphate glucose (Dol-P-Glc) onto the lipid-linked oligosaccharide intermediate Man(9)GlcNAc(2)-PP-Dol to produce Glc(1)Man(9)GlcNAc(2)-PP-Dol. Glc(1)Man(9)GlcNAc(2)-PP-Dol is a substrate for ALG8, the following enzyme in the biosynthetic pathway. This is Dolichyl pyrophosphate Man9GlcNAc2 alpha-1,3-glucosyltransferase from Gallus gallus (Chicken).